Consider the following 245-residue polypeptide: 5-oxoprolinase subunit A (245 aa).

Belongs to the LamB/PxpA family. In terms of assembly, forms a complex composed of PxpA, PxpB and PxpC.

The enzyme catalyses 5-oxo-L-proline + ATP + 2 H2O = L-glutamate + ADP + phosphate + H(+). In terms of biological role, catalyzes the cleavage of 5-oxoproline to form L-glutamate coupled to the hydrolysis of ATP to ADP and inorganic phosphate. The protein is 5-oxoprolinase subunit A of Cronobacter sakazakii (strain ATCC BAA-894) (Enterobacter sakazakii).